The chain runs to 1107 residues: MEAAVGAPDGVDQGGVGPLEDETPMDAYLRKLGLYRKLVAKDGSCLFRAVAEQVLHSQSRHVEVRMACIRYLRENREKFEAFIEGSFEEYLKRLENPQEWVGQVEISALSLMYRKDFVIYQEPNVSPSHVTENNFPEKVLLCFSNGNHYDIVYPITYKDSSAMCQSLLYELLYEKVFKTDVSKIMMGLEASEVAEESNSEISDSEDDSCKSKSTAATDVNGFKPSGSENPKNNGNSADLPLSRKVLKSLNPAVYRNVEYEIWLKSKQAQQKRDYSIAAGLQYEVGDKCHQVRLDHNGKLSNADIHGVHSENGLVLSEELGKKHTPKNLKPPPPESWNTVSGKKMKKPNSGQNFHSDTDYRGPKNLNKPIKAPSALPPRLQHPSSGVRQHAFSSHSTGSQSQKSSSEHKNLSRMPSQITRKPDRERAEDFDHVSRESYYFGLSPEERREKQAIEESRLLYEIQNRDEQAFPALSSSSVSQSPSQNSNACVPRKSSHARDRKGSMRRADAEERKDKDSLRGHTHVDKKPEPSTLEISDDKCTRVSSPSKSKKECPSPVEQKPAEHIPLSNPAPLLVSPEVHLTPAVPSLPATVPAWPSEPTTFGPTGVPAQIPILSVTQTTGPDAAVSQAHLTPSPVPVSIQAVNQPLMPLPQTMSLYQDPLYPGFPCSEKGDRAIAPPYSLCQTGEDLPKDKNILRFFFNLGVKAYSCPMWAPHSYLYPLHQAYMAACRMYPKVPVPVYPQNTWFQEAPPAQSESDCPCTDAHYSLHPEASVNGQMPQAEMGPPAFASPLVIPPSQVSEGHGQLSYQPELESENPGQLLHAEYEESLSGKNMYPQQSFGPNPFLGPVPIAPPFFPHVWYGYPFQGFVENPVMRQNIVLPPDDKGELDLPLENLDLSKECDSVSAVDEFPDARVEGAHSLSAASVSSKHEGRVEQSSQTRKADIDLASGSSAVEGKGHPPTQILNREREPGSAEPEPKRTIQSLKEKPEKVKDPKTAADVVSPGANSVDRLQRPKEESSEDENEVSNILRSGRSKQFYNQTYGSRKYKSDWGSSGRGGYQHVRGEESWKGQPNRSRDEGYQYHRHVRGRPYRGDRRRSGMGDGHRGQHT.

Residue methionine 1 is modified to N-acetylmethionine. One can recognise an OTU domain in the interval 34–155 (LYRKLVAKDG…GNHYDIVYPI (122 aa)). The interval 39-45 (VAKDGSC) is cys-loop. The active site involves aspartate 42. Cysteine 45 (nucleophile) is an active-site residue. Residues 94-104 (LENPQEWVGQV) form a variable-loop region. Tyrosine 120 is subject to Phosphotyrosine. A phosphoserine mark is found at serine 126 and serine 128. A Phosphothreonine modification is found at threonine 131. Positions 143–148 (FSNGNH) are his-loop. Histidine 148 is an active-site residue. Phosphoserine occurs at positions 166, 199, 202, and 204. Over residues 195 to 206 (EESNSEISDSED) the composition is skewed to acidic residues. 2 disordered regions span residues 195–239 (EESN…SADL) and 322–431 (KHTP…DFDH). Positions 226–236 (GSENPKNNGNS) are enriched in polar residues. A Phosphoserine modification is found at serine 340. Low complexity predominate over residues 392–403 (SSHSTGSQSQKS). The span at 419 to 431 (RKPDRERAEDFDH) shows a compositional bias: basic and acidic residues. Tyrosine 438 carries the phosphotyrosine modification. Residue serine 442 is modified to Phosphoserine. A Phosphotyrosine modification is found at tyrosine 459. The tract at residues 470-568 (PALSSSSVSQ…KPAEHIPLSN (99 aa)) is disordered. Over residues 473 to 486 (SSSSVSQSPSQNSN) the composition is skewed to low complexity. A compositionally biased stretch (basic and acidic residues) spans 495 to 528 (HARDRKGSMRRADAEERKDKDSLRGHTHVDKKPE). Phosphoserine occurs at positions 544 and 895. The segment at 918-1107 (LSAASVSSKH…MGDGHRGQHT (190 aa)) is disordered. Residues 963–994 (NREREPGSAEPEPKRTIQSLKEKPEKVKDPKT) show a composition bias toward basic and acidic residues. A phosphoserine mark is found at serine 1000, serine 1005, serine 1016, and serine 1017. A compositionally biased stretch (polar residues) spans 1032-1041 (SKQFYNQTYG). Phosphoserine is present on serine 1042. Basic and acidic residues-rich tracts occupy residues 1060–1079 (VRGEESWKGQPNRSRDEGYQ) and 1089–1107 (YRGDRRRSGMGDGHRGQHT).

Interacts with MYD88; the interaction is direct. Interacts with ALKBH3; the interaction is direct. Interacts with USP7; the interaction is direct. Interacts with USP9X; the interaction is direct. Post-translationally, phosphorylation at Ser-202 and Ser-204 activates 'Lys-63'-specific deubiquitinase activity. Induced upon stimulation with IL1B.

The protein resides in the cytoplasm. It is found in the nucleus. The catalysed reaction is Thiol-dependent hydrolysis of ester, thioester, amide, peptide and isopeptide bonds formed by the C-terminal Gly of ubiquitin (a 76-residue protein attached to proteins as an intracellular targeting signal).. Phosphorylation on Ser-202 and Ser-204 induces 'Lys-63'-specific deubiquitinase activity. In terms of biological role, deubiquitinase which hydrolyzes the isopeptide bond between the ubiquitin C-terminus and the lysine epsilon-amino group of the target protein. May negatively regulate inflammatory and pathogen recognition signaling in innate immune response. Upon phosphorylation at Ser-202 and Ser-204 residues, via IL-1 receptor and Toll-like receptor signaling pathway, specifically deubiquitinates 'Lys-63'-polyubiquitinated MYD88 adapter protein triggering down-regulation of NF-kappa-B-dependent transcription of inflammatory mediators. Independently of the catalytic activity, acts as a scaffold for alternative deubiquitinases to assemble specific deubiquitinase-substrate complexes. Associates with USP7 and USP9X deubiquitinases to stabilize alkylation repair enzyme ALKBH3, thereby promoting the repair of alkylated DNA lesions. The polypeptide is OTU domain-containing protein 4 (Mus musculus (Mouse)).